A 310-amino-acid chain; its full sequence is Zinc-finger homeodomain protein 3 (310 aa).

The segment at 1 to 64 (MEIASQEDPI…GLGKNHDHSH (64 aa)) is disordered. A compositionally biased stretch (polar residues) spans 39–56 (LNITTSNPLLVSSNSNGL). The ZF-HD dimerization-type; degenerate zinc finger occupies 87–136 (YKECLKNHAATMGGNAIDGCGEFMPSGEEGSIEALTCSVCNCHRNFHRRE). Disordered stretches follow at residues 184–220 (TAGS…YGHN) and 281–310 (LSKK…STNP). The span at 190-199 (ESEDLMEEEG) shows a compositional bias: acidic residues. A DNA-binding region (homeobox) is located at residues 222–285 (KKRFRTKFTQ…NNKQNLSKKS (64 aa)). Low complexity predominate over residues 281 to 291 (LSKKSNNVSNN). The span at 292-310 (VDLSAGNNDITENLASTNP) shows a compositional bias: polar residues.

Homo- and heterodimer with other ZFHD proteins. Interacts with MIF2 and MIF3; these interactions prevent nuclear localization and DNA-binding to inhibit transcription regulation activity. Binds to ZHD1, ZHD2 and ZHD11. Interacts with HIPP30. Interacts with KIN10, KIN11 and FLZ8. As to expression, mostly expressed in flowers and inflorescence.

It is found in the nucleus. Putative transcription factor. The chain is Zinc-finger homeodomain protein 3 (ZHD3) from Arabidopsis thaliana (Mouse-ear cress).